A 174-amino-acid chain; its full sequence is Inactive signal peptidase IA (174 aa).

The Cytoplasmic segment spans residues 1 to 7 (MKKVVKY). The chain crosses the membrane as a helical span at residues 8-28 (LISLILAIIIVLFVQTFVIVG). At 29-174 (HVIPNNDMSP…FSKWTIQFKS (146 aa)) the chain is on the extracellular side.

It belongs to the peptidase S26 family.

The protein resides in the cell membrane. In terms of biological role, catalytically inactive. The protein is Inactive signal peptidase IA (spsA) of Staphylococcus aureus (strain Mu50 / ATCC 700699).